The following is a 337-amino-acid chain: MKTLGEFIVEKQLDFSHATGELTALLSAIKLGAKIIHRDINKAGLVDILGASGVSNIQGEDQMKLDLFANEKLKAALKARGEVAGIASEEEDDIVIFDGGRAENAKYVVLMDPLDGSSNIDVNVSVGTIFSIYRRITPFGTPITEADFLQPGTKQVAAGYVVYGSSTMLVYTTGYGVHTFTYDPSLGVFCLSGEKVRYPATGCMYSINEGNYIKFPLGVKKYIKYCQEQDEATQRPYTSRYIGSLVADFHRNLLKGGIYIYPSTASHPQGKLRLLYECNPMAFLAEQAGGKATDGVNRILDIVPEKLHQRAPFFVGTKSMVEDAEGFIAKFPDEEAK.

Positions 89, 112, 114, and 115 each coordinate Mg(2+). Substrate is bound by residues 115–118 (DGSS), asparagine 208, tyrosine 241, and lysine 271. Glutamate 277 is a binding site for Mg(2+).

This sequence belongs to the FBPase class 1 family. As to quaternary structure, homotetramer. It depends on Mg(2+) as a cofactor.

It localises to the cytoplasm. It carries out the reaction beta-D-fructose 1,6-bisphosphate + H2O = beta-D-fructose 6-phosphate + phosphate. The protein operates within carbohydrate biosynthesis; gluconeogenesis. This chain is Fructose-1,6-bisphosphatase class 1, found in Yersinia enterocolitica serotype O:8 / biotype 1B (strain NCTC 13174 / 8081).